We begin with the raw amino-acid sequence, 361 residues long: Putative pumilio homolog 22 (361 aa).

The PUM-HD domain maps to 5–348 (RGYDLASQVL…NIVAIIDSET (344 aa)). Pumilio repeat units follow at residues 27–63 (HITY…EFLD) and 64–103 (LIAQ…RLHE). The stretch at 104-131 (LMAEFDEVLSTSVTADVDKLHKLASKLM) is one Pumilio 3; degenerate repeat. The stretch at 132–167 (LDSDLFFEFVITRRGSLMIQIILGKSEEVDQVILAG) is one Pumilio 4 repeat. Residues 168–205 (VKQRFIDVTTNFYGYRIMIQTIKVFKKRGDLKVYDQIL) form a Pumilio 5; degenerate repeat. One copy of the Pumilio 6; degenerate repeat lies at 206-243 (RLIGVHALYLTKDPDMGNKTFQHAINLHHQDCTTFIAC). Pumilio repeat units follow at residues 244–284 (GLQS…EIVK) and 285–319 (CDED…DFFG).

The protein localises to the cytoplasm. Functionally, sequence-specific RNA-binding protein that regulates translation and mRNA stability by binding the 3'-UTR of target mRNAs. The chain is Putative pumilio homolog 22 (APUM22) from Arabidopsis thaliana (Mouse-ear cress).